An 879-amino-acid chain; its full sequence is MKQLSSAEVRQLFLDFFKEKGHTIEPSAPLVPNNDPTILWINSGVATMKKYFDGSVIPDNPRMANAQKSIRTNDIENVGKTARHHTFFEMLGNFSIGDYFKEGAILFAWEFLTSPKWIGFDPDKLYVTVYPEDEEAKTLWREKIGLSEDHIVEIEDNFWDIGIGPSGPDSEIFYDRGPAFGDDESDPELYPGGENERYLEIWNLVFSQFNHNPDGTYTPLPKQNIDTGMGLERMVSIIQDAPTNFETDLFMPIIREVEQISGVKYGHSQENDVAFKVIADHIRTVAFAIGDGALPSNEGRGYILRRLLRRAVRYAKVLTINEPFMYKLVPVVGKIMNSFYPEVENQTDFIQKVIRTEEERFHETLNEGLAILETILKNAKETNEQTIKGADIFKLYDTFGFPVELTEEYAEDHGLKVDHAGFEAEMKEQRDRARSARADVKSMQVQGELLANLTDKSEFVGYNTTEHVSEILYLIQDDTLVDEVASGSEAQVIFKETPFYAESGGQVADKGTIESETGVAYVEDVQKAPNKQNLHRISVKEGVLKTGDTVKLAVDKVKRRETIKNHTATHLLHRALKDTLGEHVNQAGSLVSPDRLRFDFSHFGQITEEELTKMEEIVNEKIWEQINVIIEEMPIAEAKELGAMALFGEKYGEVVRVVQVGKYSIELCGGVHVRNTADIGLFKIVSETGIGAGTRRIEAVTGKEAYRFVTEQENTLKQTANLLKTTTKETPQKVEQLQADLREVRRENESLLSKLASAASADIFESPEEIGGVKVIAKQVNAKDMNQLRQFVDNWKDKKIGGVLVLGAVQGDKVNLISAVSEDAIKAGYHAGKLLKEVATRCGGNGGGRPDMAQAGGKNPAELGTALDYVSTWVKEQQA.

Residues His566, His570, Cys668, and His672 each contribute to the Zn(2+) site.

It belongs to the class-II aminoacyl-tRNA synthetase family. Zn(2+) serves as cofactor.

It localises to the cytoplasm. It carries out the reaction tRNA(Ala) + L-alanine + ATP = L-alanyl-tRNA(Ala) + AMP + diphosphate. Its function is as follows. Catalyzes the attachment of alanine to tRNA(Ala) in a two-step reaction: alanine is first activated by ATP to form Ala-AMP and then transferred to the acceptor end of tRNA(Ala). Also edits incorrectly charged Ser-tRNA(Ala) and Gly-tRNA(Ala) via its editing domain. In Listeria innocua serovar 6a (strain ATCC BAA-680 / CLIP 11262), this protein is Alanine--tRNA ligase.